Consider the following 91-residue polypeptide: ATP synthase subunit c (91 aa).

The next 2 helical transmembrane spans lie at 4 to 24 and 53 to 73; these read FTMCMLAAGFGMAIGAFGTGI and IGLAMIESLAIYVLVVCLIIL.

This sequence belongs to the ATPase C chain family. As to quaternary structure, F-type ATPases have 2 components, F(1) - the catalytic core - and F(0) - the membrane proton channel. F(1) has five subunits: alpha(3), beta(3), gamma(1), delta(1), epsilon(1). F(0) has three main subunits: a(1), b(2) and c(10-14). The alpha and beta chains form an alternating ring which encloses part of the gamma chain. F(1) is attached to F(0) by a central stalk formed by the gamma and epsilon chains, while a peripheral stalk is formed by the delta and b chains.

The protein resides in the cell inner membrane. F(1)F(0) ATP synthase produces ATP from ADP in the presence of a proton or sodium gradient. F-type ATPases consist of two structural domains, F(1) containing the extramembraneous catalytic core and F(0) containing the membrane proton channel, linked together by a central stalk and a peripheral stalk. During catalysis, ATP synthesis in the catalytic domain of F(1) is coupled via a rotary mechanism of the central stalk subunits to proton translocation. Its function is as follows. Key component of the F(0) channel; it plays a direct role in translocation across the membrane. A homomeric c-ring of between 10-14 subunits forms the central stalk rotor element with the F(1) delta and epsilon subunits. The sequence is that of ATP synthase subunit c from Trichlorobacter lovleyi (strain ATCC BAA-1151 / DSM 17278 / SZ) (Geobacter lovleyi).